An 876-amino-acid chain; its full sequence is Phosphoenolpyruvate carboxylase (876 aa).

Catalysis depends on residues His138 and Lys543.

Belongs to the PEPCase type 1 family. Mg(2+) is required as a cofactor.

The enzyme catalyses oxaloacetate + phosphate = phosphoenolpyruvate + hydrogencarbonate. Its function is as follows. Forms oxaloacetate, a four-carbon dicarboxylic acid source for the tricarboxylic acid cycle. This chain is Phosphoenolpyruvate carboxylase, found in Pseudomonas fluorescens (strain ATCC BAA-477 / NRRL B-23932 / Pf-5).